Reading from the N-terminus, the 234-residue chain is Probable transcriptional regulatory protein PSPPH_2212 (234 aa).

It belongs to the TACO1 family.

Its subcellular location is the cytoplasm. The chain is Probable transcriptional regulatory protein PSPPH_2212 from Pseudomonas savastanoi pv. phaseolicola (strain 1448A / Race 6) (Pseudomonas syringae pv. phaseolicola (strain 1448A / Race 6)).